The chain runs to 581 residues: Colicin-E2 (581 aa).

Disordered regions lie at residues 1–74, 242–269, 293–320, 421–488, and 513–566; these read MSGG…SGGG, QTLSPGVTNNTDKDVRPAGFTQGGNTRD, PDQVKQRQDEENRRQQEWDATHPVEAAE, ADAA…IADK, and DLSK…MNNI. Residues 20–35 are compositionally biased toward gly residues; that stretch reads INGGPTGLGVGGGASD. Over residues 36 to 45 the composition is skewed to low complexity; the sequence is GSGWSSENNP. Gly residues predominate over residues 46-74; it reads WGGGSGSGIHWGGGSGHGNGGGNGNSGGG. A compositionally biased stretch (polar residues) spans 242-251; it reads QTLSPGVTNN. Composition is skewed to basic and acidic residues over residues 296–320, 429–452, and 464–475; these read VKQRQDEENRRQQEWDATHPVEAAE, QERRKQKENKEKDAKDKLDKESKR, and PVGDKWLDDAGK. Polar residues predominate over residues 518 to 527; sequence FKGSNKTNIQ. The segment covering 535–554 has biased composition (basic and acidic residues); it reads RKKDQVGGRERFELHHDKPI. Residues His-549, His-574, and His-578 each coordinate Zn(2+).

Belongs to the colicin/pyosin nuclease family.

This plasmid-coded bactericidal protein is an endonuclease active on both single- and double-stranded DNA but with undefined specificity. Its function is as follows. Colicins are polypeptide toxins produced by and active against E.coli and closely related bacteria. The sequence is that of Colicin-E2 (col) from Escherichia coli.